A 397-amino-acid chain; its full sequence is Glia-derived nexin (397 aa).

The N-terminal stretch at M1–Y19 is a signal peptide. The N-linked (GlcNAc...) asparagine glycan is linked to N159.

The protein belongs to the serpin family.

The protein resides in the secreted. The protein localises to the extracellular space. Functionally, serine protease inhibitor with activity toward thrombin, trypsin, and urokinase. Promotes neurite extension by inhibiting thrombin. Binds heparin. In Rattus norvegicus (Rat), this protein is Glia-derived nexin (Serpine2).